We begin with the raw amino-acid sequence, 31 residues long: Cytochrome b6-f complex subunit 8 (31 aa).

The chain crosses the membrane as a helical span at residues isoleucine 5–valine 25.

This sequence belongs to the PetN family. As to quaternary structure, the 4 large subunits of the cytochrome b6-f complex are cytochrome b6, subunit IV (17 kDa polypeptide, PetD), cytochrome f and the Rieske protein, while the 4 small subunits are PetG, PetL, PetM and PetN. The complex functions as a dimer.

Its subcellular location is the plastid. It localises to the chloroplast thylakoid membrane. In terms of biological role, component of the cytochrome b6-f complex, which mediates electron transfer between photosystem II (PSII) and photosystem I (PSI), cyclic electron flow around PSI, and state transitions. In Cicer arietinum (Chickpea), this protein is Cytochrome b6-f complex subunit 8.